The sequence spans 398 residues: MHGSNKLPGFATRAIHHGYDPQDHGGALVPPVYQTATFTFPTVEYGAACFAGEQAGHFYSRISNPTLNLLEARMASLEGGEAGLALASGMGAITSTLWTLLRPGDEVLLGNTLYGCTFAFLHHGIGEFGVKLRHVDMADLQALEAAMTPATRVIYFESPANPNMHMADIAGVAKIARKHGATVVVDNTYCTPYLQRPLELGADLVVHSATKYLSGHGDITAGIVVGSQALVDRIRLQGLKDMTGAVLSPHDAALLMRGIKTLNLRMDRHCANAQVLAEFLARQPQVELIHYPGLASFPQYTLARQQMSQPGGMIAFELKGGIGAGRRFMNALQLFSRAVSLGDAESLAQHPASMTHSSYTPEERAHYGISEGLVRLSVGLEDIDDLLADVQQALKASA.

Residues Tyr59 to Arg61 and Gly89 to Met90 each bind pyridoxal 5'-phosphate. Tyr114 is a binding site for substrate. Ser208 to Thr210 contributes to the pyridoxal 5'-phosphate binding site. Position 211 is an N6-(pyridoxal phosphate)lysine (Lys211). Residue Arg375 coordinates substrate.

Belongs to the trans-sulfuration enzymes family. L-methionine gamma-lyase subfamily. Homotetramer; dimer of active dimers. Pyridoxal 5'-phosphate is required as a cofactor.

The enzyme catalyses L-methionine + H2O = methanethiol + 2-oxobutanoate + NH4(+). The catalysed reaction is L-homocysteine + H2O = 2-oxobutanoate + hydrogen sulfide + NH4(+) + H(+). Its activity is regulated as follows. Irreversibly inactivated by DL-propargylglycine. Catalyzes the alpha,gamma-elimination of L-methionine to produce methanethiol, 2-oxobutanoate and ammonia. Is involved in L-methionine catabolism. In fact, shows a multicatalytic function since it also catalyzes gamma-replacement of L-methionine with thiol compounds, alpha,gamma-elimination and gamma-replacement reactions of L-homocysteine and its S-substituted derivatives, O-substituted-L-homoserines and DL-selenomethionine, and, to a lesser extent, alpha,beta-elimination and beta-replacement reactions of L-cysteine, S-methyl-L-cysteine, and O-acetyl-L-serine. Also catalyzes deamination and gamma-addition reactions of L-vinylglycine. Thus, the enzyme is able to cleave C-S, C-Se, and C-O bonds of sulfur, selenium, and oxygen amino acids, respectively. The sequence is that of L-methionine gamma-lyase from Pseudomonas putida (Arthrobacter siderocapsulatus).